The sequence spans 276 residues: Non-homologous end joining protein Ku (276 aa).

The region spanning 11-177 is the Ku domain; that stretch reads ISFGLVHIPI…PEEIRSMEPL (167 aa). A disordered region spans residues 256-276; it reads QVKTQQKKEAAPKKERRRKTS.

It belongs to the prokaryotic Ku family. As to quaternary structure, homodimer. Interacts with LigD.

In terms of biological role, with LigD forms a non-homologous end joining (NHEJ) DNA repair enzyme, which repairs dsDNA breaks with reduced fidelity. Binds linear dsDNA with 5'- and 3'- overhangs but not closed circular dsDNA nor ssDNA. Recruits and stimulates the ligase activity of LigD. This chain is Non-homologous end joining protein Ku, found in Heliobacterium modesticaldum (strain ATCC 51547 / Ice1).